A 656-amino-acid chain; its full sequence is Fidgetin-like protein 1 (656 aa).

Positions 293–302 are enriched in polar residues; that stretch reads KYSNQPQRNP. The disordered stretch occupies residues 293–354; sequence KYSNQPQRNP…QGNSEMNAPS (62 aa). The segment covering 331-340 has biased composition (basic and acidic residues); the sequence is RQEDVQDSNR. ATP contacts are provided by residues Ala386 and 426-431; that span reads GTGKTL.

Belongs to the AAA ATPase family. In terms of assembly, hexamer. It depends on Mg(2+) as a cofactor.

Its subcellular location is the nucleus. It localises to the cytoplasm. The protein resides in the perinuclear region. It catalyses the reaction ATP + H2O = ADP + phosphate + H(+). Its function is as follows. May be involved in DNA double-strand break (DBS) repair via homologous recombination (HR). May regulate osteoblast proliferation and differentiation. The protein is Fidgetin-like protein 1 (fignl1) of Xenopus tropicalis (Western clawed frog).